The sequence spans 336 residues: Probable tRNA N6-adenosine threonylcarbamoyltransferase (336 aa).

Positions 110, 114, and 131 each coordinate a divalent metal cation. Residues 131–135 (YVSGG), aspartate 163, glycine 178, glutamate 182, and asparagine 267 each bind substrate. Aspartate 295 is a binding site for a divalent metal cation.

It belongs to the KAE1 / TsaD family. As to quaternary structure, component of the EKC/KEOPS complex; the whole complex dimerizes. A divalent metal cation is required as a cofactor.

The protein resides in the cytoplasm. Its subcellular location is the nucleus. It carries out the reaction L-threonylcarbamoyladenylate + adenosine(37) in tRNA = N(6)-L-threonylcarbamoyladenosine(37) in tRNA + AMP + H(+). Its function is as follows. Component of the EKC/KEOPS complex that is required for the formation of a threonylcarbamoyl group on adenosine at position 37 (t(6)A37) in tRNAs that read codons beginning with adenine. The complex is probably involved in the transfer of the threonylcarbamoyl moiety of threonylcarbamoyl-AMP (TC-AMP) to the N6 group of A37. Osgep likely plays a direct catalytic role in this reaction, but requires other protein(s) of the complex to fulfill this activity. The protein is Probable tRNA N6-adenosine threonylcarbamoyltransferase of Dictyostelium discoideum (Social amoeba).